The sequence spans 344 residues: Palmitoyltransferase ZDHHC4 (344 aa).

Residues 1–2 (MD) are Lumenal-facing. A helical membrane pass occupies residues 3 to 23 (FLVLFLFYLASVLMGLVLICV). Over 24–67 (CSKTHSLKGLARGGAQIFSCIIPECLQRAVHGLLHYLFHTRNHT) the chain is Cytoplasmic. The chain crosses the membrane as a helical span at residues 68-88 (FIVLHLVLQGMVYTEYTWEVF). At 89 to 99 (GYCQELELSLH) the chain is on the lumenal side. A helical membrane pass occupies residues 100 to 120 (YLLLPYLLLGVNLFFFTLTCG). At 121–192 (TNPGIITKAN…NNCIGAWNIR (72 aa)) the chain is on the cytoplasmic side. The region spanning 149–199 (VRCSTCDLRKPARSKHCSVCNWCVHRFDHHCVWVNNCIGAWNIRYFLIYVL) is the DHHC domain. Cys-179 serves as the catalytic S-palmitoyl cysteine intermediate. Residues 193–213 (YFLIYVLTLTASAATVAIVST) form a helical membrane-spanning segment. Residues 214-255 (TFLVHLVVMSDLYQETYIDDLGHLHVMDTVFLIQYLFLTFPR) are Lumenal-facing. Residues 256 to 276 (IVFMLGFVVVLSFLLGGYLLF) form a helical membrane-spanning segment. Topologically, residues 277–344 (VLYLAATNQT…FPCHERKKQE (68 aa)) are cytoplasmic. The short motif at 341–344 (KKQE) is the Di-lysine motif element.

It belongs to the DHHC palmitoyltransferase family. As to quaternary structure, interacts with CPT1A.

It is found in the endoplasmic reticulum membrane. It localises to the golgi apparatus membrane. The protein resides in the cell membrane. The catalysed reaction is L-cysteinyl-[protein] + hexadecanoyl-CoA = S-hexadecanoyl-L-cysteinyl-[protein] + CoA. Its function is as follows. Palmitoyltransferase that catalyzes the addition of palmitate onto protein substrates including the D(2) dopamine receptor DRD2, GSK3B or MAVS. Mediates GSK3B palmitoylation to prevent its AKT1-mediated phosphorylation leading to activation of the STAT3 signaling pathway. Also catalyzes MAVS palmitoylation which promotes its stabilization and activation by inhibiting 'Lys-48'- but facilitating 'Lys-63'-linked ubiquitination. This is Palmitoyltransferase ZDHHC4 from Homo sapiens (Human).